Reading from the N-terminus, the 330-residue chain is Putative UV-damage endonuclease (330 aa).

The protein belongs to the uve1/UvsE family.

Its subcellular location is the virion. Its function is as follows. Endonuclease for the repair of UV-irradiated DNA. This Acanthamoeba polyphaga mimivirus (APMV) protein is Putative UV-damage endonuclease.